A 191-amino-acid chain; its full sequence is Putative 3-methyladenine DNA glycosylase (191 aa).

It belongs to the DNA glycosylase MPG family.

The polypeptide is Putative 3-methyladenine DNA glycosylase (Cutibacterium acnes (strain DSM 16379 / KPA171202) (Propionibacterium acnes)).